The following is a 102-amino-acid chain: Integration host factor subunit alpha (102 aa).

Belongs to the bacterial histone-like protein family. As to quaternary structure, heterodimer of an alpha and a beta chain.

Functionally, this protein is one of the two subunits of integration host factor, a specific DNA-binding protein that functions in genetic recombination as well as in transcriptional and translational control. This chain is Integration host factor subunit alpha, found in Albidiferax ferrireducens (strain ATCC BAA-621 / DSM 15236 / T118) (Rhodoferax ferrireducens).